A 491-amino-acid chain; its full sequence is Aspartyl/glutamyl-tRNA(Asn/Gln) amidotransferase subunit B (491 aa).

This sequence belongs to the GatB/GatE family. GatB subfamily. Heterotrimer of A, B and C subunits.

It carries out the reaction L-glutamyl-tRNA(Gln) + L-glutamine + ATP + H2O = L-glutaminyl-tRNA(Gln) + L-glutamate + ADP + phosphate + H(+). It catalyses the reaction L-aspartyl-tRNA(Asn) + L-glutamine + ATP + H2O = L-asparaginyl-tRNA(Asn) + L-glutamate + ADP + phosphate + 2 H(+). Its function is as follows. Allows the formation of correctly charged Asn-tRNA(Asn) or Gln-tRNA(Gln) through the transamidation of misacylated Asp-tRNA(Asn) or Glu-tRNA(Gln) in organisms which lack either or both of asparaginyl-tRNA or glutaminyl-tRNA synthetases. The reaction takes place in the presence of glutamine and ATP through an activated phospho-Asp-tRNA(Asn) or phospho-Glu-tRNA(Gln). The polypeptide is Aspartyl/glutamyl-tRNA(Asn/Gln) amidotransferase subunit B (Trichormus variabilis (strain ATCC 29413 / PCC 7937) (Anabaena variabilis)).